A 487-amino-acid polypeptide reads, in one-letter code: L-tartrate/succinate antiporter (487 aa).

14 helical membrane-spanning segments follow: residues 10–30 (YLAP…AGLE), 33–53 (TWLY…EPVP), 54–74 (GAVV…WLLF), 93–113 (WAVS…FMFG), 137–157 (TLFL…VTPS), 189–209 (IGSY…AIFL), 230–250 (LSWG…VLLV), 292–312 (LMVG…AAMV), 313–333 (GYSV…DIVS), 340–360 (VFFW…TGFI), 370–390 (SLSG…FYLL), 393–413 (FFAS…AAAL), 418–438 (IPLP…SILT), and 465–485 (IFGL…MPVV).

Belongs to the SLC13A/DASS transporter (TC 2.A.47) family. DIT1 subfamily.

It is found in the cell inner membrane. The enzyme catalyses (2R,3R)-tartrate(out) + succinate(in) = (2R,3R)-tartrate(in) + succinate(out). Its function is as follows. Catalyzes the uptake of tartrate in exchange for intracellular succinate. Essential for anaerobic L-tartrate fermentation. The protein is L-tartrate/succinate antiporter (ttdT) of Shigella dysenteriae serotype 1 (strain Sd197).